Here is a 93-residue protein sequence, read N- to C-terminus: Corticostatin 1 (93 aa).

Positions 1–19 are cleaved as a signal peptide; it reads MRTLILLAAILLAALQAQA. Positions 20 to 59 are excised as a propeptide; it reads ELFSVNVDEVLDQQQPGSDQDLVIHLTGEESSALQVPDTK. 3 cysteine pairs are disulfide-bonded: cysteine 62/cysteine 90, cysteine 64/cysteine 79, and cysteine 69/cysteine 89.

Belongs to the alpha-defensin family.

The protein resides in the secreted. Functionally, microbicidal activity and inhibits corticotropin (ACTH) stimulated corticosterone production. The sequence is that of Corticostatin 1 from Oryctolagus cuniculus (Rabbit).